We begin with the raw amino-acid sequence, 179 residues long: Large ribosomal subunit protein uL5 (179 aa).

This sequence belongs to the universal ribosomal protein uL5 family. As to quaternary structure, part of the 50S ribosomal subunit; part of the 5S rRNA/L5/L18/L25 subcomplex. Contacts the 5S rRNA and the P site tRNA. Forms a bridge to the 30S subunit in the 70S ribosome.

Functionally, this is one of the proteins that bind and probably mediate the attachment of the 5S RNA into the large ribosomal subunit, where it forms part of the central protuberance. In the 70S ribosome it contacts protein S13 of the 30S subunit (bridge B1b), connecting the 2 subunits; this bridge is implicated in subunit movement. Contacts the P site tRNA; the 5S rRNA and some of its associated proteins might help stabilize positioning of ribosome-bound tRNAs. The sequence is that of Large ribosomal subunit protein uL5 from Alkaliphilus metalliredigens (strain QYMF).